Reading from the N-terminus, the 518-residue chain is Bifunctional purine biosynthesis protein PurH (518 aa).

The 146-residue stretch at 1-146 (MGRMALLSTS…KNHAHVTVLV (146 aa)) folds into the MGS-like domain.

It belongs to the PurH family.

The catalysed reaction is (6R)-10-formyltetrahydrofolate + 5-amino-1-(5-phospho-beta-D-ribosyl)imidazole-4-carboxamide = 5-formamido-1-(5-phospho-D-ribosyl)imidazole-4-carboxamide + (6S)-5,6,7,8-tetrahydrofolate. It carries out the reaction IMP + H2O = 5-formamido-1-(5-phospho-D-ribosyl)imidazole-4-carboxamide. Its pathway is purine metabolism; IMP biosynthesis via de novo pathway; 5-formamido-1-(5-phospho-D-ribosyl)imidazole-4-carboxamide from 5-amino-1-(5-phospho-D-ribosyl)imidazole-4-carboxamide (10-formyl THF route): step 1/1. The protein operates within purine metabolism; IMP biosynthesis via de novo pathway; IMP from 5-formamido-1-(5-phospho-D-ribosyl)imidazole-4-carboxamide: step 1/1. This Thermosynechococcus vestitus (strain NIES-2133 / IAM M-273 / BP-1) protein is Bifunctional purine biosynthesis protein PurH.